The primary structure comprises 417 residues: Snake venom metalloproteinase aculysin-1 (417 aa).

The signal sequence occupies residues 1–20 (MIQVLLVTICLAAFPYQGSS). A propeptide spanning residues 21-189 (IMLESGKVND…KKPSWLNLTP (169 aa)) is cleaved from the precursor. In terms of domain architecture, Peptidase M12B spans 197–392 (TSVNLQLIVD…KKPKCIHKKS (196 aa)). Disulfide bonds link C308–C387, C349–C371, and C351–C354. A Zn(2+)-binding site is contributed by H333. The active site involves E334. The Zn(2+) site is built by H337 and H343. The propeptide occupies 393–417 (LKTDTVSTSVSGNEPLDDNVDGFHA). A disordered region spans residues 398-417 (VSTSVSGNEPLDDNVDGFHA). The span at 407 to 417 (PLDDNVDGFHA) shows a compositional bias: acidic residues.

It belongs to the venom metalloproteinase (M12B) family. P-I subfamily. As to quaternary structure, monomer. It depends on Zn(2+) as a cofactor. In terms of tissue distribution, expressed by the venom gland.

Its subcellular location is the secreted. In terms of biological role, this protein is an alkaline zinc metalloprotease from snake venom that possesses weak hemorrhagic activity. This chain is Snake venom metalloproteinase aculysin-1, found in Deinagkistrodon acutus (Hundred-pace snake).